A 79-amino-acid chain; its full sequence is Acyl carrier protein (79 aa).

The Carrier domain occupies 2 to 77 (SDIEARVKKI…NAIDYANTHH (76 aa)). Serine 37 bears the O-(pantetheine 4'-phosphoryl)serine mark.

This sequence belongs to the acyl carrier protein (ACP) family. In terms of processing, 4'-phosphopantetheine is transferred from CoA to a specific serine of apo-ACP by AcpS. This modification is essential for activity because fatty acids are bound in thioester linkage to the sulfhydryl of the prosthetic group.

The protein resides in the cytoplasm. It functions in the pathway lipid metabolism; fatty acid biosynthesis. Functionally, carrier of the growing fatty acid chain in fatty acid biosynthesis. This Polaromonas naphthalenivorans (strain CJ2) protein is Acyl carrier protein.